The chain runs to 130 residues: Small ribosomal subunit protein uS11c (130 aa).

This sequence belongs to the universal ribosomal protein uS11 family. In terms of assembly, part of the 30S ribosomal subunit.

The protein resides in the plastid. The protein localises to the chloroplast. This Adiantum capillus-veneris (Maidenhair fern) protein is Small ribosomal subunit protein uS11c.